Here is a 185-residue protein sequence, read N- to C-terminus: Anaphase-promoting complex subunit 10 (185 aa).

The residue at position 2 (Thr-2) is an N-acetylthreonine. In terms of domain architecture, DOC spans 2–185; it reads TTPNKTPPGA…IDFMMYRSIR (184 aa). Residue Lys-169 is modified to N6-acetyllysine.

This sequence belongs to the APC10 family. As to quaternary structure, the mammalian APC/C is composed at least of 14 distinct subunits ANAPC1, ANAPC2, CDC27/APC3, ANAPC4, ANAPC5, CDC16/APC6, ANAPC7, CDC23/APC8, ANAPC10, ANAPC11, CDC26/APC12, ANAPC13, ANAPC15 and ANAPC16 that assemble into a complex of at least 19 chains with a combined molecular mass of around 1.2 MDa; APC/C interacts with FZR1 and FBXO5. The C-terminus of APC10 binds to CDC27/APC3. Interacts with PIWIL1; interaction only takes place when PIWIL1 binds piRNA. Interacts with FBXO43; the interaction is direct.

It participates in protein modification; protein ubiquitination. Its function is as follows. Component of the anaphase promoting complex/cyclosome (APC/C), a cell cycle-regulated E3 ubiquitin ligase that controls progression through mitosis and the G1 phase of the cell cycle. The APC/C complex acts by mediating ubiquitination and subsequent degradation of target proteins: it mainly mediates the formation of 'Lys-11'-linked polyubiquitin chains and, to a lower extent, the formation of 'Lys-48'- and 'Lys-63'-linked polyubiquitin chains. The APC/C complex catalyzes assembly of branched 'Lys-11'-/'Lys-48'-linked branched ubiquitin chains on target proteins. The protein is Anaphase-promoting complex subunit 10 (ANAPC10) of Bos taurus (Bovine).